Here is a 266-residue protein sequence, read N- to C-terminus: Zinc finger protein SNAI2 (266 aa).

Positions 1–20 (MPRSFLVKKHFNSAKKPNYG) are SNAG domain. Residues 75–115 (SGYPSSLGRVSPPPQSDTSSKDHSGSESPISDEEERLQTKL) form a disordered region. C2H2-type zinc fingers lie at residues 126 to 148 (FQCSLCSKTYSTFSGLAKHKQLH), 157 to 179 (FSCKYCEKEYVSLGALKMHIRTH), 183 to 205 (CVCKICGKAFSRPWLLQGHIRTH), and 211 to 233 (FSCPHCNRAFADRSNLRAHLQTH). A C2H2-type 5; atypical zinc finger spans residues 239–262 (YQCKNCSKTFSRMSLLHKHEESGC).

It belongs to the snail C2H2-type zinc-finger protein family. As to quaternary structure, interacts (via SNAG domain) with limd1 (via LIM domains), wtip (via LIM domains) and ajuba (via LIM domains). Interacts with elp3. As to expression, first expressed on the lateral side of stage 12 embryos. At stage 14, strongly expressed in the lateral neural folds. At stage 16, expressed in pre-migratory neural crest cells. At stage 18, expression is dispersed over the neural plate in a pattern surrounding the rhombomeres. At stage 22, expressed in neural crest derivatives, including the branchial arches and the tissues surrounding the eyes and forebrain. After stage 17, expression is weak in the lateral plate mesoderm, increasing at stage 26, but was down-regulated in the pronephros region at stage 26.

The protein localises to the nucleus. Functionally, probable transcriptional repressor. Acts downstream of snai1 in the specification of the neural crest and neural crest migration. This Xenopus laevis (African clawed frog) protein is Zinc finger protein SNAI2 (snai2).